A 377-amino-acid polypeptide reads, in one-letter code: Succinyl-diaminopimelate desuccinylase (377 aa).

His-68 is a Zn(2+) binding site. The active site involves Asp-70. A Zn(2+)-binding site is contributed by Asp-101. The Proton acceptor role is filled by Glu-135. 3 residues coordinate Zn(2+): Glu-136, Glu-164, and His-350.

It belongs to the peptidase M20A family. DapE subfamily. As to quaternary structure, homodimer. Zn(2+) serves as cofactor. It depends on Co(2+) as a cofactor.

It catalyses the reaction N-succinyl-(2S,6S)-2,6-diaminopimelate + H2O = (2S,6S)-2,6-diaminopimelate + succinate. It functions in the pathway amino-acid biosynthesis; L-lysine biosynthesis via DAP pathway; LL-2,6-diaminopimelate from (S)-tetrahydrodipicolinate (succinylase route): step 3/3. Functionally, catalyzes the hydrolysis of N-succinyl-L,L-diaminopimelic acid (SDAP), forming succinate and LL-2,6-diaminopimelate (DAP), an intermediate involved in the bacterial biosynthesis of lysine and meso-diaminopimelic acid, an essential component of bacterial cell walls. The chain is Succinyl-diaminopimelate desuccinylase from Acinetobacter baumannii (strain AB307-0294).